Consider the following 495-residue polypeptide: Probable cytosol aminopeptidase (495 aa).

Residues Lys-261 and Asp-266 each coordinate Mn(2+). Lys-273 is a catalytic residue. Positions 284, 343, and 345 each coordinate Mn(2+). Arg-347 is an active-site residue.

This sequence belongs to the peptidase M17 family. Requires Mn(2+) as cofactor.

The protein resides in the cytoplasm. The catalysed reaction is Release of an N-terminal amino acid, Xaa-|-Yaa-, in which Xaa is preferably Leu, but may be other amino acids including Pro although not Arg or Lys, and Yaa may be Pro. Amino acid amides and methyl esters are also readily hydrolyzed, but rates on arylamides are exceedingly low.. The enzyme catalyses Release of an N-terminal amino acid, preferentially leucine, but not glutamic or aspartic acids.. Presumably involved in the processing and regular turnover of intracellular proteins. Catalyzes the removal of unsubstituted N-terminal amino acids from various peptides. This Chelativorans sp. (strain BNC1) protein is Probable cytosol aminopeptidase.